The primary structure comprises 151 residues: Small ribosomal subunit protein uS15 (151 aa).

The tract at residues 1–20 (MARLHSGKRGSSGSTRPLRT) is disordered.

It belongs to the universal ribosomal protein uS15 family. In terms of assembly, part of the 30S ribosomal subunit.

The chain is Small ribosomal subunit protein uS15 from Methanococcus maripaludis (strain C7 / ATCC BAA-1331).